A 571-amino-acid polypeptide reads, in one-letter code: Cytochrome P450 monooxygenase g430 (571 aa).

A helical membrane pass occupies residues 8 to 28; the sequence is GALIWVVTSYILYAIISNFII. C471 contacts heme. Residues 552 to 571 are disordered; the sequence is CPLPAEAKLPKSRKPIGTAS.

This sequence belongs to the cytochrome P450 family. The cofactor is heme.

The protein resides in the membrane. It participates in mycotoxin biosynthesis. Functionally, cytochrome P450 monooxygenase; part of the gene cluster that mediates the biosynthesis of 1233A, a natural compound known as an inhibitor of HMG-CoA synthase in the mevalonate pathway and with antibacterial and antifungal activities. The highly reducing polyketide synthase g433 is responsible for the 1233A backbone biosynthesis and the cytochrome P450 monooxygenase g430 catalyzes oxidation of the backbone. This is Cytochrome P450 monooxygenase g430 from Fusarium sp.